Here is a 343-residue protein sequence, read N- to C-terminus: Holliday junction branch migration complex subunit RuvB (343 aa).

The large ATPase domain (RuvB-L) stretch occupies residues 1–182 (MRDELLNTPT…FGISNRLDYY (182 aa)). ATP-binding positions include Ile-21, Arg-22, Gly-63, Lys-66, Thr-67, Thr-68, 129–131 (EDF), Arg-172, Tyr-182, and Arg-219. Thr-67 is a Mg(2+) binding site. The interval 183–253 (SAELLQRIII…LARKTLAALE (71 aa)) is small ATPAse domain (RuvB-S). The segment at 256-343 (EDGLDDMDKK…DGPLFQKGSS (88 aa)) is head domain (RuvB-H). 2 residues coordinate DNA: Arg-311 and Arg-316.

This sequence belongs to the RuvB family. As to quaternary structure, homohexamer. Forms an RuvA(8)-RuvB(12)-Holliday junction (HJ) complex. HJ DNA is sandwiched between 2 RuvA tetramers; dsDNA enters through RuvA and exits via RuvB. An RuvB hexamer assembles on each DNA strand where it exits the tetramer. Each RuvB hexamer is contacted by two RuvA subunits (via domain III) on 2 adjacent RuvB subunits; this complex drives branch migration. In the full resolvosome a probable DNA-RuvA(4)-RuvB(12)-RuvC(2) complex forms which resolves the HJ.

Its subcellular location is the cytoplasm. It catalyses the reaction ATP + H2O = ADP + phosphate + H(+). Functionally, the RuvA-RuvB-RuvC complex processes Holliday junction (HJ) DNA during genetic recombination and DNA repair, while the RuvA-RuvB complex plays an important role in the rescue of blocked DNA replication forks via replication fork reversal (RFR). RuvA specifically binds to HJ cruciform DNA, conferring on it an open structure. The RuvB hexamer acts as an ATP-dependent pump, pulling dsDNA into and through the RuvAB complex. RuvB forms 2 homohexamers on either side of HJ DNA bound by 1 or 2 RuvA tetramers; 4 subunits per hexamer contact DNA at a time. Coordinated motions by a converter formed by DNA-disengaged RuvB subunits stimulates ATP hydrolysis and nucleotide exchange. Immobilization of the converter enables RuvB to convert the ATP-contained energy into a lever motion, pulling 2 nucleotides of DNA out of the RuvA tetramer per ATP hydrolyzed, thus driving DNA branch migration. The RuvB motors rotate together with the DNA substrate, which together with the progressing nucleotide cycle form the mechanistic basis for DNA recombination by continuous HJ branch migration. Branch migration allows RuvC to scan DNA until it finds its consensus sequence, where it cleaves and resolves cruciform DNA. The protein is Holliday junction branch migration complex subunit RuvB of Prosthecochloris aestuarii (strain DSM 271 / SK 413).